Consider the following 325-residue polypeptide: Heme A synthase (325 aa).

The next 5 membrane-spanning stretches (helical) occupy residues 6–26, 88–108, 116–136, 155–175, and 184–204; these read WLAV…FTRL, LVGR…FVVG, LRLC…WYMV, LFCA…PTVI, and LVGC…GLVA. His246 is a binding site for heme. 3 helical membrane-spanning segments follow: residues 248 to 268, 275 to 295, and 297 to 317; these read MSAF…FFYD, VFLV…TLLF, and IPID…GICV. Residue His305 coordinates heme.

Belongs to the COX15/CtaA family. Type 2 subfamily. As to quaternary structure, interacts with CtaB. It depends on heme b as a cofactor.

It localises to the cell membrane. The enzyme catalyses Fe(II)-heme o + 2 A + H2O = Fe(II)-heme a + 2 AH2. It functions in the pathway porphyrin-containing compound metabolism; heme A biosynthesis; heme A from heme O: step 1/1. Its function is as follows. Catalyzes the conversion of heme O to heme A by two successive hydroxylations of the methyl group at C8. The first hydroxylation forms heme I, the second hydroxylation results in an unstable dihydroxymethyl group, which spontaneously dehydrates, resulting in the formyl group of heme A. This Neorickettsia sennetsu (strain ATCC VR-367 / Miyayama) (Ehrlichia sennetsu) protein is Heme A synthase.